Consider the following 469-residue polypeptide: Neuraminidase (469 aa).

Over 1–6 (MNTNQR) the chain is Intravirion. Residues 7 to 27 (IITIGTICLIVGIISLLLQIG) form a helical membrane-spanning segment. Positions 11–33 (GTICLIVGIISLLLQIGNIISLW) are involved in apical transport and lipid raft association. Residues 28-469 (NIISLWISHS…GADLPFTIDK (442 aa)) lie on the Virion surface side of the membrane. Residues 36–90 (HSIQTREKNHPEVCNQSVITYENNTWVNQTYVNISNANIVAGQGVTSIILAGNSP) form a hypervariable stalk region region. Asn-50, Asn-58, Asn-63, and Asn-68 each carry an N-linked (GlcNAc...) asparagine; by host glycan. The head of neuraminidase stretch occupies residues 91–469 (LCPISGWAIY…GADLPFTIDK (379 aa)). 8 disulfides stabilise this stretch: Cys-92-Cys-417, Cys-124-Cys-129, Cys-184-Cys-231, Cys-233-Cys-238, Cys-279-Cys-292, Cys-281-Cys-290, Cys-318-Cys-335, and Cys-421-Cys-446. Arg-118 serves as a coordination point for substrate. N-linked (GlcNAc...) asparagine; by host glycosylation is present at Asn-146. Catalysis depends on Asp-151, which acts as the Proton donor/acceptor. Arg-152 contributes to the substrate binding site. N-linked (GlcNAc...) asparagine; by host glycosylation is present at Asn-235. Residue 277-278 (EE) participates in substrate binding. Residue Arg-293 participates in substrate binding. Ca(2+)-binding residues include Asp-294, Asp-324, and Asn-344. Arg-368 is a binding site for substrate. Tyr-402 (nucleophile) is an active-site residue. An N-linked (GlcNAc...) asparagine; by host glycan is attached at Asn-454.

It belongs to the glycosyl hydrolase 34 family. Homotetramer. It depends on Ca(2+) as a cofactor. In terms of processing, N-glycosylated.

It is found in the virion membrane. It localises to the host apical cell membrane. It carries out the reaction Hydrolysis of alpha-(2-&gt;3)-, alpha-(2-&gt;6)-, alpha-(2-&gt;8)- glycosidic linkages of terminal sialic acid residues in oligosaccharides, glycoproteins, glycolipids, colominic acid and synthetic substrates.. Inhibited by the neuraminidase inhibitors zanamivir (Relenza) and oseltamivir (Tamiflu). These drugs interfere with the release of progeny virus from infected cells and are effective against all influenza strains. Resistance to neuraminidase inhibitors is quite rare. In terms of biological role, catalyzes the removal of terminal sialic acid residues from viral and cellular glycoconjugates. Cleaves off the terminal sialic acids on the glycosylated HA during virus budding to facilitate virus release. Additionally helps virus spread through the circulation by further removing sialic acids from the cell surface. These cleavages prevent self-aggregation and ensure the efficient spread of the progeny virus from cell to cell. Otherwise, infection would be limited to one round of replication. Described as a receptor-destroying enzyme because it cleaves a terminal sialic acid from the cellular receptors. May facilitate viral invasion of the upper airways by cleaving the sialic acid moieties on the mucin of the airway epithelial cells. Likely to plays a role in the budding process through its association with lipid rafts during intracellular transport. May additionally display a raft-association independent effect on budding. Plays a role in the determination of host range restriction on replication and virulence. Sialidase activity in late endosome/lysosome traffic seems to enhance virus replication. The chain is Neuraminidase from Influenza A virus (strain A/Swine/Wisconsin/1/1967 H1N1).